The sequence spans 470 residues: Transcriptional activator PmfR (470 aa).

Forms oligomers in solution, probably homotetramers.

Its pathway is alkaloid degradation; nicotine degradation [regulation]. Transcriptional regulator involved in the activation of the purU-mabO-folD-nepA-nepB and mao-ORF55-nbr operons implicated in the nicotine catabolic pathway. The sequence GTTT-14 bp-AAAC seems to be the core binding site of the regulator upstream of the -35 promoter region of the operon. The chain is Transcriptional activator PmfR (pmfR) from Paenarthrobacter nicotinovorans (Arthrobacter nicotinovorans).